A 374-amino-acid polypeptide reads, in one-letter code: Cyclin-D (374 aa).

Belongs to the cyclin family. Cyclin D subfamily.

The sequence is that of Cyclin-D (CycD) from Ostreococcus tauri.